The sequence spans 429 residues: Putative chloride channel protein ClcB-like (429 aa).

The next 11 membrane-spanning stretches (helical) occupy residues 1 to 21 (MLAI…AFRE), 44 to 64 (LPWW…GLTL), 146 to 166 (LLVA…PIAG), 168 to 188 (VFVC…PLLV), 200 to 220 (FFGY…GWEV), 221 to 241 (LTYL…LGLI), 259 to 279 (LALG…VWGN), 283 to 303 (VVNG…VLVC), 315 to 335 (GAVG…GLLY), 354 to 376 (AVVG…ILMI), and 383 to 405 (YQVV…ATGA).

It belongs to the chloride channel (TC 2.A.49) family. ClcB subfamily.

It is found in the cell inner membrane. The chain is Putative chloride channel protein ClcB-like from Ralstonia nicotianae (strain ATCC BAA-1114 / GMI1000) (Ralstonia solanacearum).